The following is a 290-amino-acid chain: Acetylglutamate kinase (290 aa).

Substrate is bound by residues 64 to 65, Arg-86, and Asn-183; that span reads GG.

It belongs to the acetylglutamate kinase family. ArgB subfamily.

It localises to the cytoplasm. It catalyses the reaction N-acetyl-L-glutamate + ATP = N-acetyl-L-glutamyl 5-phosphate + ADP. It functions in the pathway amino-acid biosynthesis; L-arginine biosynthesis; N(2)-acetyl-L-ornithine from L-glutamate: step 2/4. In terms of biological role, catalyzes the ATP-dependent phosphorylation of N-acetyl-L-glutamate. This chain is Acetylglutamate kinase, found in Halothermothrix orenii (strain H 168 / OCM 544 / DSM 9562).